Consider the following 243-residue polypeptide: Homeobox protein goosecoid isoform B (243 aa).

Residues lysine 148 to lysine 207 constitute a DNA-binding region (homeobox). The interval alanine 201–serine 243 is disordered. Residues alanine 217–asparagine 226 show a composition bias toward polar residues. The segment covering serine 227–serine 243 has biased composition (basic and acidic residues).

Belongs to the paired homeobox family. Bicoid subfamily.

It localises to the nucleus. Its function is as follows. Plays a central role in executing Spemann's organizer phenomenon (the dorsal blastopore lip of the early Xenopus laevis gastrula can organize a complete secondary body axis when transplanted to another embryo). This is Homeobox protein goosecoid isoform B (gsc-b) from Xenopus laevis (African clawed frog).